We begin with the raw amino-acid sequence, 469 residues long: RuvB-like helicase 2 (469 aa).

76–83 is a binding site for ATP; the sequence is GPPSTGKT.

It belongs to the RuvB family. May form heterododecamers with RVB1. Component of the SWR1 chromatin remodeling complex, the INO80 chromatin remodeling complex, and of the R2TP complex.

It is found in the nucleus. It carries out the reaction ATP + H2O = ADP + phosphate + H(+). In terms of biological role, DNA helicase which participates in several chromatin remodeling complexes, including the SWR1 and the INO80 complexes. The SWR1 complex mediates the ATP-dependent exchange of histone H2A for the H2A variant HZT1 leading to transcriptional regulation of selected genes by chromatin remodeling. The INO80 complex remodels chromatin by shifting nucleosomes and is involved in DNA repair. Also involved in pre-rRNA processing. The polypeptide is RuvB-like helicase 2 (rvb2) (Aspergillus fumigatus (strain ATCC MYA-4609 / CBS 101355 / FGSC A1100 / Af293) (Neosartorya fumigata)).